The primary structure comprises 372 residues: ATP phosphoribosyltransferase regulatory subunit (372 aa).

Belongs to the class-II aminoacyl-tRNA synthetase family. HisZ subfamily. Heteromultimer composed of HisG and HisZ subunits.

The protein resides in the cytoplasm. Its pathway is amino-acid biosynthesis; L-histidine biosynthesis; L-histidine from 5-phospho-alpha-D-ribose 1-diphosphate: step 1/9. In terms of biological role, required for the first step of histidine biosynthesis. May allow the feedback regulation of ATP phosphoribosyltransferase activity by histidine. The sequence is that of ATP phosphoribosyltransferase regulatory subunit from Rhizobium rhizogenes (strain K84 / ATCC BAA-868) (Agrobacterium radiobacter).